We begin with the raw amino-acid sequence, 272 residues long: Glutamate racemase (272 aa).

Residues 10-11 (DS) and 42-43 (YG) each bind substrate. Cys74 functions as the Proton donor/acceptor in the catalytic mechanism. 75–76 (NT) is a substrate binding site. Cys185 (proton donor/acceptor) is an active-site residue. 186–187 (TH) is a substrate binding site.

Belongs to the aspartate/glutamate racemases family.

The catalysed reaction is L-glutamate = D-glutamate. Its pathway is cell wall biogenesis; peptidoglycan biosynthesis. Functionally, provides the (R)-glutamate required for cell wall biosynthesis. This is Glutamate racemase from Bacillus velezensis (strain DSM 23117 / BGSC 10A6 / LMG 26770 / FZB42) (Bacillus amyloliquefaciens subsp. plantarum).